Consider the following 899-residue polypeptide: Protein translocase subunit SecA (899 aa).

Residues Gln87, Gly105 to Thr109, and Asp516 contribute to the ATP site. Cys884, Cys886, Cys895, and His896 together coordinate Zn(2+).

It belongs to the SecA family. Monomer and homodimer. Part of the essential Sec protein translocation apparatus which comprises SecA, SecYEG and auxiliary proteins SecDF. Other proteins may also be involved. The cofactor is Zn(2+).

It is found in the cell inner membrane. The protein localises to the cytoplasm. The catalysed reaction is ATP + H2O + cellular proteinSide 1 = ADP + phosphate + cellular proteinSide 2.. Its function is as follows. Part of the Sec protein translocase complex. Interacts with the SecYEG preprotein conducting channel. Has a central role in coupling the hydrolysis of ATP to the transfer of proteins into and across the cell membrane, serving as an ATP-driven molecular motor driving the stepwise translocation of polypeptide chains across the membrane. The sequence is that of Protein translocase subunit SecA from Borrelia garinii subsp. bavariensis (strain ATCC BAA-2496 / DSM 23469 / PBi) (Borreliella bavariensis).